A 101-amino-acid chain; its full sequence is Copper-sensing transcriptional repressor CsoR (101 aa).

A disordered region spans residues 1–22 (MEKHNEHKTLNHKSSKEKDQIT). Cu cation-binding residues include Cys45, His70, and Cys74.

This sequence belongs to the CsoR family. As to quaternary structure, homotetramer. Binds DNA with a stoichiometry of 2 tetramers per DNA.

Its subcellular location is the cytoplasm. Functionally, copper-sensitive repressor that has a key role in copper homeostasis. Negatively regulates expression of the copZA operon and of cutJ/ycnJ. In the absence of copper ions, binds with high affinity to the copZA promoter and represses the transcription. In the presence of copper ions, CsoR binds Cu(1+), which significantly decreases its DNA binding affinity and leads to the transcription of the genes. In Bacillus subtilis (strain 168), this protein is Copper-sensing transcriptional repressor CsoR (csoR).